A 424-amino-acid chain; its full sequence is MFS-type transporter opdF (424 aa).

The span at M1–N10 shows a compositional bias: basic and acidic residues. The disordered stretch occupies residues M1–P23. Transmembrane regions (helical) follow at residues V36–F56, V102–T122, L127–M147, I160–V180, and V187–A207. N-linked (GlcNAc...) asparagine glycosylation occurs at N208. 6 consecutive transmembrane segments (helical) span residues L239 to V259, G265 to G285, F299 to P319, F329 to V349, V364 to A384, and T391 to L411.

The protein belongs to the major facilitator superfamily. Monocarboxylate porter (TC 2.A.1.13) family.

It is found in the membrane. Its function is as follows. MFS-type transporter; part of the gene cluster that mediates the biosynthesis of oxopyrrolidines, polyketide-amino acid hybrid compounds with feature structures of tetramic acid. This is MFS-type transporter opdF from Penicillium oxalicum (strain 114-2 / CGMCC 5302) (Penicillium decumbens).